Here is a 151-residue protein sequence, read N- to C-terminus: Meiotically up-regulated gene 114 protein (151 aa).

It localises to the cytoplasm. In terms of biological role, has a role in meiosis. This chain is Meiotically up-regulated gene 114 protein (mug114), found in Schizosaccharomyces pombe (strain 972 / ATCC 24843) (Fission yeast).